An 818-amino-acid polypeptide reads, in one-letter code: Structure-specific endonuclease subunit SLX4 (818 aa).

5 disordered regions span residues 1–39 (MSFL…PSAS), 53–151 (RDPY…SSSN), 279–324 (FSEG…HQDS), 413–437 (NAQF…KTSK), and 587–712 (MLPA…MASE). The segment covering 28-39 (VIDSSPSVPSAS) has biased composition (low complexity). Positions 90-103 (PSERTKDAHGKDRF) are enriched in basic and acidic residues. Positions 306 to 316 (TTSTTITSLST) are enriched in low complexity. A compositionally biased stretch (polar residues) spans 426-437 (TRSPCSNPKTSK). A compositionally biased stretch (basic and acidic residues) spans 604-618 (QMSKRDTIKSRDIRA). 3 stretches are compositionally biased toward polar residues: residues 621–640 (SRSN…QNTG), 652–672 (SSKS…TQSV), and 696–712 (SLAS…MASE).

This sequence belongs to the SLX4 family. Forms a heterodimer with SLX1. Phosphorylated in response to DNA damage.

The protein resides in the nucleus. Regulatory subunit of the SLX1-SLX4 structure-specific endonuclease that resolves DNA secondary structures generated during DNA repair and recombination. Has endonuclease activity towards branched DNA substrates, introducing single-strand cuts in duplex DNA close to junctions with ss-DNA. The protein is Structure-specific endonuclease subunit SLX4 of Uncinocarpus reesii (strain UAMH 1704).